The primary structure comprises 347 residues: Quinolinate synthase (347 aa).

Iminosuccinate is bound by residues His-47 and Ser-68. [4Fe-4S] cluster is bound at residue Cys-113. Residues 139 to 141 (YAN) and Ser-156 contribute to the iminosuccinate site. [4Fe-4S] cluster is bound at residue Cys-200. Iminosuccinate contacts are provided by residues 226 to 228 (HPE) and Thr-243. Cys-297 contacts [4Fe-4S] cluster.

It belongs to the quinolinate synthase family. Type 1 subfamily. [4Fe-4S] cluster serves as cofactor.

Its subcellular location is the cytoplasm. It carries out the reaction iminosuccinate + dihydroxyacetone phosphate = quinolinate + phosphate + 2 H2O + H(+). It functions in the pathway cofactor biosynthesis; NAD(+) biosynthesis; quinolinate from iminoaspartate: step 1/1. Its function is as follows. Catalyzes the condensation of iminoaspartate with dihydroxyacetone phosphate to form quinolinate. The polypeptide is Quinolinate synthase (Escherichia coli O45:K1 (strain S88 / ExPEC)).